A 335-amino-acid polypeptide reads, in one-letter code: Glyceraldehyde-3-phosphate dehydrogenase 1 (335 aa).

Residues 13–14 (TI) and glycine 111 contribute to the NAD(+) site. 140-142 (SCN) provides a ligand contact to D-glyceraldehyde 3-phosphate. Cysteine 141 serves as the catalytic Nucleophile. Residue arginine 169 participates in NAD(+) binding. Residues threonine 171 and 195 to 196 (HG) each bind D-glyceraldehyde 3-phosphate. Glutamine 300 is a binding site for NAD(+).

This sequence belongs to the glyceraldehyde-3-phosphate dehydrogenase family. In terms of assembly, homotetramer.

The protein resides in the cytoplasm. It catalyses the reaction D-glyceraldehyde 3-phosphate + phosphate + NADP(+) = (2R)-3-phospho-glyceroyl phosphate + NADPH + H(+). It carries out the reaction D-glyceraldehyde 3-phosphate + phosphate + NAD(+) = (2R)-3-phospho-glyceroyl phosphate + NADH + H(+). It participates in carbohydrate degradation; glycolysis; pyruvate from D-glyceraldehyde 3-phosphate: step 1/5. The sequence is that of Glyceraldehyde-3-phosphate dehydrogenase 1 (gapA) from Methanosarcina acetivorans (strain ATCC 35395 / DSM 2834 / JCM 12185 / C2A).